We begin with the raw amino-acid sequence, 234 residues long: UPF0104 membrane protein MJ1078 (234 aa).

5 consecutive transmembrane segments (helical) span residues 32 to 52, 70 to 90, 123 to 143, 164 to 184, and 198 to 218; these read VGTV…LLFI, IKWG…FLIV, LITL…FIFL, LTAI…LIYI, and VLIL…AIMF.

Belongs to the UPF0104 family.

The protein resides in the cell membrane. This is UPF0104 membrane protein MJ1078 from Methanocaldococcus jannaschii (strain ATCC 43067 / DSM 2661 / JAL-1 / JCM 10045 / NBRC 100440) (Methanococcus jannaschii).